A 750-amino-acid polypeptide reads, in one-letter code: Cation-transporting P-type ATPase B (750 aa).

The HMA domain occupies Arg-17–Thr-80. The a metal cation site is built by Cys-28 and Cys-31. 6 helical membrane passes run Leu-104–Val-124, Phe-129–Trp-149, Glu-167–Val-187, Ala-200–Leu-220, Ile-360–Leu-380, and Ala-389–Thr-409. Asp-445 functions as the 4-aspartylphosphate intermediate in the catalytic mechanism. 6 helical membrane-spanning segments follow: residues Val-471–Val-491, Val-500–Val-520, Ser-547–Ile-567, Val-663–Ala-683, Thr-693–Ser-713, and Gly-715–Ser-735.

This sequence belongs to the cation transport ATPase (P-type) (TC 3.A.3) family. Type IB subfamily.

It localises to the cell membrane. The enzyme catalyses ATP + H2O = ADP + phosphate + H(+). This is Cation-transporting P-type ATPase B (ctpB) from Mycobacterium leprae (strain TN).